We begin with the raw amino-acid sequence, 508 residues long: Adenylosuccinate synthetase 1, chloroplastic (508 aa).

A chloroplast-targeting transit peptide spans 1 to 56 (MNISILRLDSNPITTATSPATATANHRSGILGCYNGTYSCRLNQLQQRKKNPSIIV). GTP contacts are provided by residues 95–101 (GDEGKGK) and 123–125 (GHT). The active-site Proton acceptor is the D96. Mg(2+) is bound by residues D96 and G123. Residues 96–99 (DEGK), 121–124 (NAGH), T213, R227, Q307, T322, and R386 each bind IMP. H124 acts as the Proton donor in catalysis. Residue 382–388 (TTTGRPR) participates in substrate binding. Residues R388, 414–416 (KLD), and 497–499 (GIG) each bind GTP.

It belongs to the adenylosuccinate synthetase family. Homodimer. Mg(2+) is required as a cofactor.

The protein resides in the plastid. It localises to the chloroplast. It catalyses the reaction IMP + L-aspartate + GTP = N(6)-(1,2-dicarboxyethyl)-AMP + GDP + phosphate + 2 H(+). The protein operates within purine metabolism; AMP biosynthesis via de novo pathway; AMP from IMP: step 1/2. Its function is as follows. Plays an important role in the de novo pathway and in the salvage pathway of purine nucleotide biosynthesis. Catalyzes the first committed step in the biosynthesis of AMP from IMP. The chain is Adenylosuccinate synthetase 1, chloroplastic from Capsicum frutescens (Cayenne pepper).